Here is a 239-residue protein sequence, read N- to C-terminus: Phosphoribosylaminoimidazole-succinocarboxamide synthase (239 aa).

The protein belongs to the SAICAR synthetase family.

The enzyme catalyses 5-amino-1-(5-phospho-D-ribosyl)imidazole-4-carboxylate + L-aspartate + ATP = (2S)-2-[5-amino-1-(5-phospho-beta-D-ribosyl)imidazole-4-carboxamido]succinate + ADP + phosphate + 2 H(+). Its pathway is purine metabolism; IMP biosynthesis via de novo pathway; 5-amino-1-(5-phospho-D-ribosyl)imidazole-4-carboxamide from 5-amino-1-(5-phospho-D-ribosyl)imidazole-4-carboxylate: step 1/2. This Bacillus cereus (strain 03BB102) protein is Phosphoribosylaminoimidazole-succinocarboxamide synthase.